The primary structure comprises 335 residues: DNA primase small subunit PriS (335 aa).

Active-site residues include aspartate 96, aspartate 98, and aspartate 243.

It belongs to the eukaryotic-type primase small subunit family. Heterodimer of a small subunit (PriS) and a large subunit (PriL). It depends on Mg(2+) as a cofactor. Mn(2+) is required as a cofactor.

Catalytic subunit of DNA primase, an RNA polymerase that catalyzes the synthesis of short RNA molecules used as primers for DNA polymerase during DNA replication. The small subunit contains the primase catalytic core and has DNA synthesis activity on its own. Binding to the large subunit stabilizes and modulates the activity, increasing the rate of DNA synthesis while decreasing the length of the DNA fragments, and conferring RNA synthesis capability. The DNA polymerase activity may enable DNA primase to also catalyze primer extension after primer synthesis. May also play a role in DNA repair. The chain is DNA primase small subunit PriS from Archaeoglobus fulgidus (strain ATCC 49558 / DSM 4304 / JCM 9628 / NBRC 100126 / VC-16).